The sequence spans 434 residues: Mitochondrial distribution and morphology protein 10 (434 aa).

The protein belongs to the MDM10 family. As to quaternary structure, component of the ER-mitochondria encounter structure (ERMES) or MDM complex, composed of mmm1, mdm10, mdm12 and mdm34. Associates with the mitochondrial outer membrane sorting assembly machinery SAM(core) complex.

The protein resides in the mitochondrion outer membrane. In terms of biological role, component of the ERMES/MDM complex, which serves as a molecular tether to connect the endoplasmic reticulum and mitochondria. Components of this complex are involved in the control of mitochondrial shape and protein biogenesis and may function in phospholipid exchange. mdm10 is involved in the late assembly steps of the general translocase of the mitochondrial outer membrane (TOM complex). Functions in the tom40-specific route of the assembly of outer membrane beta-barrel proteins, including the association of tom40 with the receptor tom22 and small TOM proteins. Can associate with the SAM(core) complex as well as the mdm12-mmm1 complex, both involved in late steps of the major beta-barrel assembly pathway, that is responsible for biogenesis of all outer membrane beta-barrel proteins. May act as a switch that shuttles between both complexes and channels precursor proteins into the tom40-specific pathway. Plays a role in mitochondrial morphology and in the inheritance of mitochondria. This is Mitochondrial distribution and morphology protein 10 (mdmB) from Aspergillus niger (strain ATCC MYA-4892 / CBS 513.88 / FGSC A1513).